The primary structure comprises 344 residues: Phenylalanine--tRNA ligase alpha subunit (344 aa).

A Mg(2+)-binding site is contributed by glutamate 269.

This sequence belongs to the class-II aminoacyl-tRNA synthetase family. Phe-tRNA synthetase alpha subunit type 1 subfamily. Tetramer of two alpha and two beta subunits. Requires Mg(2+) as cofactor.

It localises to the cytoplasm. It carries out the reaction tRNA(Phe) + L-phenylalanine + ATP = L-phenylalanyl-tRNA(Phe) + AMP + diphosphate + H(+). The chain is Phenylalanine--tRNA ligase alpha subunit from Ralstonia pickettii (strain 12J).